Reading from the N-terminus, the 231-residue chain is Ribosomal RNA small subunit methyltransferase G (231 aa).

S-adenosyl-L-methionine contacts are provided by residues glycine 92, leucine 97, 143–144 (VE), and arginine 162.

This sequence belongs to the methyltransferase superfamily. RNA methyltransferase RsmG family.

It localises to the cytoplasm. It carries out the reaction guanosine(527) in 16S rRNA + S-adenosyl-L-methionine = N(7)-methylguanosine(527) in 16S rRNA + S-adenosyl-L-homocysteine. Its function is as follows. Specifically methylates the N7 position of guanine in position 527 of 16S rRNA. This Burkholderia thailandensis (strain ATCC 700388 / DSM 13276 / CCUG 48851 / CIP 106301 / E264) protein is Ribosomal RNA small subunit methyltransferase G.